A 661-amino-acid polypeptide reads, in one-letter code: Hemocyanin C chain (661 aa).

The cysteines at positions 3 and 557 are disulfide-linked. Cu cation is bound by residues His-200, His-204, His-230, His-350, His-354, and His-390. An N-linked (GlcNAc...) asparagine glycan is attached at Asn-476.

Belongs to the tyrosinase family. Hemocyanin subfamily. As to quaternary structure, hexamer of a number of different chains, of which A, B, and C have been identified. Hemolymph.

It is found in the secreted. The protein localises to the extracellular space. In terms of biological role, hemocyanins are copper-containing oxygen carriers occurring freely dissolved in the hemolymph of many mollusks and arthropods. This is Hemocyanin C chain from Panulirus interruptus (California spiny lobster).